Reading from the N-terminus, the 265-residue chain is PBSX phage terminase small subunit (265 aa).

Residues 241-265 (KQKAEKTDDSQEPIEIMIKRKERKS) are disordered.

The protein to B.subtilis YqaS and B.subtilis phage SPP1 terminase small subunit. As to quaternary structure, dimer of a small and a large subunit.

Its function is as follows. Functions as a terminase. The protein is PBSX phage terminase small subunit (xtmA) of Bacillus subtilis (strain 168).